The chain runs to 2061 residues: Putative PWWP domain-containing DNA repair factor 4 (2061 aa).

Disordered regions lie at residues 101-211, 382-408, 541-586, 668-694, 864-910, 1046-1072, 1159-1182, 1205-1383, 1521-1548, and 1602-1726; these read TNLG…SRAR, ALGR…RSSV, TPGT…GDGS, PATL…GDGS, PTPG…SERS, PGTM…GDRS, ALHG…RGDS, KAIA…RDDK, PGAL…DSSP, and KKGK…KLAN. 2 stretches are compositionally biased toward basic and acidic residues: residues 133-153 and 162-173; these read PRED…KREN and ESKRALRDDRSQ. Over residues 397 to 408 the composition is skewed to polar residues; sequence TPGTLQGNRSSV. Over residues 1051–1061 the composition is skewed to polar residues; it reads GDSSTARTATA. Positions 1364–1373 are enriched in polar residues; it reads DSSQVHTTIA. Over residues 1639–1648 the composition is skewed to basic and acidic residues; the sequence is LKEETQDSRP. Positions 1656–1665 are enriched in polar residues; the sequence is PESSPFSGNI. The 62-residue stretch at 1756 to 1817 folds into the PWWP domain; that stretch reads RGTMVWFKFQ…KHLDCKEKEK (62 aa).

The protein belongs to the PWWP3A family.

This chain is Putative PWWP domain-containing DNA repair factor 4, found in Homo sapiens (Human).